Here is a 110-residue protein sequence, read N- to C-terminus: Cytochrome c6 (110 aa).

Residues 1-25 form the signal peptide; that stretch reads MKKKLSVLFTVFSFFVIGFAQIAFA. 4 residues coordinate heme c: cysteine 39, cysteine 42, histidine 43, and methionine 83.

The protein belongs to the cytochrome c family. PetJ subfamily. In terms of assembly, monomer. Binds 1 heme c group covalently per subunit.

The protein resides in the plastid. Its subcellular location is the chloroplast thylakoid lumen. Its function is as follows. Functions as an electron carrier between membrane-bound cytochrome b6-f and photosystem I in oxygenic photosynthesis. In Pyropia yezoensis (Susabi-nori), this protein is Cytochrome c6 (petJ).